The primary structure comprises 600 residues: Cationic amino acid transporter 4, vacuolar (600 aa).

At 1–32 (MNSLVRRKQVDSVHLIKNDGPHQLAKKLSAVD) the chain is on the cytoplasmic side. A helical transmembrane segment spans residues 33 to 53 (LVAIGVGTTIGAGVYILVGTV). Over 54 to 60 (AREHTGP) the chain is Vacuolar. Residues 61–81 (ALAVSFFIAGVAAALSACCYA) form a helical membrane-spanning segment. At 82–92 (ELASRCPSAGS) the chain is on the cytoplasmic side. The helical transmembrane segment at 93–115 (AYHYAYICLGEGIAWLVGWALVL) threads the bilayer. Residues 116-152 (DYTIGGSAIARGITPNLASFFGGLDNLPVFLARQTIP) lie on the Vacuolar side of the membrane. Residues 153–173 (GVGIVVDPCAALLIMIVTILL) traverse the membrane as a helical segment. Over 174–184 (CFGIKESSTVQ) the chain is Cytoplasmic. The helical transmembrane segment at 185–205 (AIVTSVNVCTLVFIIVVGGYL) threads the bilayer. Residues 206–220 (ACKTGWVGYDLPSGY) lie on the Vacuolar side of the membrane. The helical transmembrane segment at 221–241 (FPFGLNGILAGSAVVFFSYIG) threads the bilayer. The Cytoplasmic portion of the chain corresponds to 242 to 264 (FDTVTSTAEEVKNPQRDLPLGIG). The chain crosses the membrane as a helical span at residues 265 to 285 (IALLICCILYMLLSVVIVGLV). The Vacuolar portion of the chain corresponds to 286 to 308 (PYYSLNPDTPISSAFGDSGMQWA). The helical transmembrane segment at 309-329 (AYILTTGAITALCASLLGSLL) threads the bilayer. Over 330 to 360 (AQPRIFMAMARDGLLPAFFSEISPRTQVPVK) the chain is Cytoplasmic. Residues 361–381 (STIAIGVLAAALAFFMDVAQL) traverse the membrane as a helical segment. A topological domain (vacuolar) is located at residue Ser382. A helical membrane pass occupies residues 383-403 (EMVSVGTLMAFTAVAVCVLVL). The Cytoplasmic segment spans residues 404-462 (RYVPPDGVPLSSSSQTLSDTDESRAETENFLVDAIESSDSPLLGNETARDEKYFGKRRK). A helical transmembrane segment spans residues 463–483 (IAAWSIALVCIGVLGLASAAS). The Vacuolar portion of the chain corresponds to 484-492 (AERLPSFPR). Residues 493–513 (FTICGVSAVILLGSLITLGYI) traverse the membrane as a helical segment. The Cytoplasmic portion of the chain corresponds to 514–528 (DEDEERHNFGHKGGF). Residues 529-549 (LCPFVPYLPVLCILINTYLII) form a helical membrane-spanning segment. Asn550 is a topological domain (vacuolar). A helical transmembrane segment spans residues 551-571 (IGAGTWIRVLIWLLIGSMIYI). Residues 572–600 (FYGRSHSLLNNAVYVPTMTCTRKTTDHLA) lie on the Cytoplasmic side of the membrane.

The protein belongs to the amino acid-polyamine-organocation (APC) superfamily. Cationic amino acid transporter (CAT) (TC 2.A.3.3) family. As to expression, expressed in roots, stems, flowers, and leaves.

It localises to the vacuole membrane. Permease involved in the transport of the cationic amino acids. In Arabidopsis thaliana (Mouse-ear cress), this protein is Cationic amino acid transporter 4, vacuolar (CAT4).